Here is a 221-residue protein sequence, read N- to C-terminus: UPF0319 protein NTHI1987 (221 aa).

The signal sequence occupies residues 1 to 21 (MKLRAVVLGLATLCTSTATFA).

Belongs to the UPF0319 family.

The protein is UPF0319 protein NTHI1987 of Haemophilus influenzae (strain 86-028NP).